A 148-amino-acid chain; its full sequence is Small ribosomal subunit protein uS9 (148 aa).

It belongs to the universal ribosomal protein uS9 family.

This Drosophila melanogaster (Fruit fly) protein is Small ribosomal subunit protein uS9 (RpS16).